A 417-amino-acid chain; its full sequence is NADH-quinone oxidoreductase subunit D (417 aa).

Belongs to the complex I 49 kDa subunit family. NDH-1 is composed of 14 different subunits. Subunits NuoB, C, D, E, F, and G constitute the peripheral sector of the complex.

The protein localises to the cell inner membrane. It carries out the reaction a quinone + NADH + 5 H(+)(in) = a quinol + NAD(+) + 4 H(+)(out). NDH-1 shuttles electrons from NADH, via FMN and iron-sulfur (Fe-S) centers, to quinones in the respiratory chain. The immediate electron acceptor for the enzyme in this species is believed to be ubiquinone. Couples the redox reaction to proton translocation (for every two electrons transferred, four hydrogen ions are translocated across the cytoplasmic membrane), and thus conserves the redox energy in a proton gradient. The polypeptide is NADH-quinone oxidoreductase subunit D (Francisella tularensis subsp. holarctica (strain FTNF002-00 / FTA)).